The primary structure comprises 308 residues: Protein Bel-1 (308 aa).

The DNA-binding element occupies 94-203; that stretch reads SKSTCKRLIL…KGTRLPKRRC (110 aa). The segment at 200–242 is disordered; sequence KRRCNPSRRYETFREHPPTRKRRSKEGIPTDQQPSTSNGDPMA. The segment covering 207 to 217 has biased composition (basic and acidic residues); sequence RRYETFREHPP. A Nuclear localization signal motif is present at residues 217–226; the sequence is PTRKRRSKEG. Residues 228-304 form a transactivation domain region; sequence PTDQQPSTSN…PLGSSEDQLL (77 aa). Residues 229–238 show a composition bias toward polar residues; sequence TDQQPSTSNG.

In terms of assembly, homodimer or homomultimer. Forms complexes with the host nuclear factors NFIA, NFIB, NFIC or NFIX.

It is found in the host nucleus. In terms of biological role, transcriptional transactivator that activates the viral internal promoter (IP), thereby enhancing its own expression. This transactivation is repressed by nuclear factor I. Also transactivates the long terminal repeat (LTR) promoter, thereby inducing structural gene expression, initiating the late phase of infection. It is therefore a key regulator of viral gene expression. It directly binds to and activates DNA target sites of viral promoters and those of distinct cellular genes. Required for viral replication. The polypeptide is Protein Bel-1 (bel1) (Simian foamy virus type 1 (SFVmac)).